We begin with the raw amino-acid sequence, 307 residues long: Taste receptor type 2 member 41 (307 aa).

Over 1 to 7 (MQAALMA) the chain is Extracellular. A helical membrane pass occupies residues 8–28 (FFMLLFSLLSLLGIAANGFIV). Over 29-40 (LVLGREWLRYGR) the chain is Cytoplasmic. A helical membrane pass occupies residues 41 to 61 (LLPLDMILISLGASRXCLQLV). The Extracellular segment spans residues 62–88 (GTVHNFYYSARKVEYSGGLGRQFFHLH). Residues 89 to 109 (WHFLNSATFWFCSWLSVLFCV) traverse the membrane as a helical segment. Over 110 to 129 (KIANITHPTFLWLKWRFPGW) the chain is Cytoplasmic. The helical transmembrane segment at 130–150 (VPWLLLGSVLISFIITLLFFW) threads the bilayer. The Extracellular segment spans residues 151–183 (VNYPVYQELLIRKFSGNMTYKWNTRIETYYFPS). Asn167 carries N-linked (GlcNAc...) asparagine glycosylation. Residues 184–204 (LKLVIWSIPFSVFLVSIMLLI) form a helical membrane-spanning segment. The Cytoplasmic segment spans residues 205-234 (NSLRRHTQRMQHNGHSLQDPSTQAHTRALK). Residues 235–255 (SLISFLFLYALSFLSLIIDAT) traverse the membrane as a helical segment. The Extracellular portion of the chain corresponds to 256–264 (KFISMQNDF). A helical transmembrane segment spans residues 265–285 (YWPWQIAVYLCISVHPFILIF). Topologically, residues 286-307 (SNLKLRSMFWQVLLLARGFWVA) are cytoplasmic.

The protein belongs to the G-protein coupled receptor T2R family.

The protein resides in the membrane. Its function is as follows. Receptor that may play a role in the perception of bitterness and is gustducin-linked. May play a role in sensing the chemical composition of the gastrointestinal content. The activity of this receptor may stimulate alpha gustducin, mediate PLC-beta-2 activation and lead to the gating of TRPM5. This Gorilla gorilla gorilla (Western lowland gorilla) protein is Taste receptor type 2 member 41 (TAS2R41).